The following is a 453-amino-acid chain: Cyclic GMP-AMP phosphodiesterase SMPDL3A (453 aa).

The N-terminal stretch at 1 to 22 (MALVRALVCCLLTAWHCRSGLG) is a signal peptide. Asp-45 and His-47 together coordinate Zn(2+). A disulfide bridge links Cys-62 with Cys-81. An N-linked (GlcNAc...) asparagine glycan is attached at Asn-69. Position 110 (Asp-110) interacts with Zn(2+). ATP is bound at residue His-114. A glycan (N-linked (GlcNAc...) asparagine) is linked at Asn-131. Residue Asn-151 coordinates Zn(2+). Residues Asn-151 and His-152 each contribute to the ATP site. Asn-222 and Asn-238 each carry an N-linked (GlcNAc...) asparagine glycan. His-252 serves as a coordination point for Zn(2+). A glycan (N-linked (GlcNAc...) asparagine) is linked at Asn-263. Residues His-293 and His-295 each coordinate Zn(2+). Asn-356 carries N-linked (GlcNAc...) asparagine glycosylation. Cystine bridges form between Cys-420/Cys-424 and Cys-430/Cys-443. An N-linked (GlcNAc...) asparagine glycan is attached at Asn-437.

Belongs to the acid sphingomyelinase family. As to quaternary structure, monomer. Homodimer; homodimerizes following 2',3'-cGAMP-binding. Zn(2+) serves as cofactor. In terms of processing, N-glycosylation is required for protein maturation, secretion and phosphodiesterase activity. As to expression, detected in blood serum. Detected in macrophages (at protein level).

The protein localises to the secreted. The enzyme catalyses 2',3'-cGAMP + H2O = 5'-pGpA(2'-5') + H(+). It carries out the reaction 5'-pGpA(2'-5') + H2O = 5'-GpA(2'-5') + phosphate. The catalysed reaction is a ribonucleoside 5'-triphosphate + H2O = a ribonucleoside 5'-diphosphate + phosphate + H(+). It catalyses the reaction ATP + H2O = ADP + phosphate + H(+). With respect to regulation, requires micromolar levels of Zn(2+) for activity. Inhibited by millimolar levels of Zn(2+). Its function is as follows. Cyclic-nucleotide phosphodiesterase that acts as a negative regulator of innate immunity by mediating degradation of 2',3'-cGAMP, thereby inhibiting the cGAS-STING signaling. Specifically linearizes 2',3'-cGAMP into 2'5'-bond pGpA and further hydrolyzes pGpA to produce GpA. Also has in vitro nucleotide phosphodiesterase activity with nucleoside triphosphates, such as ATP. Has in vitro activity with p-nitrophenyl-TMP. Has lower activity with nucleoside diphosphates, and no activity with nucleoside monophosphates. Has in vitro activity with CDP-choline, giving rise to CMP and phosphocholine. Has in vitro activity with CDP-ethanolamine. Does not have sphingomyelin phosphodiesterase activity. The sequence is that of Cyclic GMP-AMP phosphodiesterase SMPDL3A from Homo sapiens (Human).